Here is a 358-residue protein sequence, read N- to C-terminus: Nuclear receptor subfamily 1 group I member 3 (358 aa).

The segment at residues 18 to 93 is a DNA-binding region (nuclear receptor); sequence PRNCVVCGDR…VGMRKDMILS (76 aa). The segment at 21–41 adopts an NR C4-type zinc-finger fold; the sequence is CVVCGDRATGYHFHALTCEGC. Residue Thr-48 is modified to Phosphothreonine; by PKC. The segment at 57 to 81 adopts an NR C4-type zinc-finger fold; that stretch reads CPFAGRCEVSKAQRRHCPACRLQKC. The 240-residue stretch at 119–358 folds into the NR LBD domain; the sequence is QQKELIQTLL…MMPLLGEICS (240 aa).

The protein belongs to the nuclear hormone receptor family. NR1 subfamily. Heterodimer of NR1I3 and RXR. Interacts with PSMC4. Interacts with ECT2. Directly interacts with DNAJC7; this complex may also include HSP90. Interacts with CRY1. Interacts with CRY2 in a ligand-dependent manner. Phosphorylated at Thr-48 by PKC, dephosphorylation of Thr-48 is required for nuclear translocation and activation.

The protein resides in the nucleus. The protein localises to the cytoplasm. It is found in the cytoskeleton. In terms of biological role, binds and transactivates the retinoic acid response elements that control expression of the retinoic acid receptor beta 2 and alcohol dehydrogenase 3 genes. Transactivates both the phenobarbital responsive element module of the human CYP2B6 gene and the CYP3A4 xenobiotic response element. This is Nuclear receptor subfamily 1 group I member 3 (Nr1i3) from Rattus norvegicus (Rat).